The primary structure comprises 552 residues: FACT complex subunit POB3 (552 aa).

Positions 190 to 205 (KKEESSNEVVPKKEDG) are enriched in basic and acidic residues. 2 disordered regions span residues 190–209 (KKEE…AEGE) and 484–552 (QTAL…PKVE). Residues 490–529 (DSDEEDINMGSAGEDDESVDEDFQVSSDNDADEVAEEFDS) are compositionally biased toward acidic residues. Basic and acidic residues predominate over residues 541 to 552 (DEERPSKKPKVE).

The protein belongs to the SSRP1 family. Forms a stable heterodimer with SPT16. The SPT16-POB3 dimer weakly associates with multiple molecules of NHP6 (NHP6A or NHP6B) to form the FACT (yFACT or SNP) complex. The FACT complex interacts with the CK2 (casein kinase II) complex subunits CKA1, CKA2, CKB1 and CKB2 and the components of the transcription machinery CHD1, CTR9, PAF1 and CDC73. The FACT complex interacts with the PAF1 complex. SPT16 interacts with SAS3 and POL1. Interacts directly with RFA1.

The protein resides in the nucleus. It localises to the chromosome. Functionally, component of the FACT complex, a general chromatin factor that acts to reorganize nucleosomes. The FACT complex is involved in multiple processes that require DNA as a template such as mRNA elongation, DNA replication and DNA repair. During transcription elongation the FACT complex acts as a histone chaperone that both destabilizes and restores nucleosomal structure. It facilitates the passage of RNA polymerase II and transcription by promoting the dissociation of one histone H2A-H2B dimer from the nucleosome, then subsequently promotes the reestablishment of the nucleosome following the passage of RNA polymerase II. Transcription elongation is promoted by the repression of transcription initiation from cryptic sites. Also acts in establishing transcription initiation complexes and promotes SPT15/TBP-binding to a TATA box. Together with replication factor-A protein (RPA), FACT may play a role in nucleosome deposition during DNA replication. The chain is FACT complex subunit POB3 (POB3) from Saccharomyces cerevisiae (strain ATCC 204508 / S288c) (Baker's yeast).